A 666-amino-acid polypeptide reads, in one-letter code: Protein OS-9 (666 aa).

The signal sequence occupies residues 1–30; that stretch reads MAAEALLSSLLGLLFLGLLLPAHLTGGVGS. The 123-residue stretch at 108-230 folds into the MRH domain; that stretch reads APCLLKTKDW…SIRTSRLCPH (123 aa). Cysteines 110 and 123 form a disulfide. 3 residues coordinate a mannooligosaccharide derivative: Trp-117, Trp-118, and Gln-130. A glycan (N-linked (GlcNAc...) asparagine) is linked at Asn-177. Intrachain disulfides connect Cys-181/Cys-216 and Cys-196/Cys-228. Residues Asp-182, Arg-188, Glu-212, and Tyr-218 each coordinate a mannooligosaccharide derivative. Disordered regions lie at residues 261 to 356, 370 to 449, 505 to 540, and 631 to 666; these read RQAE…NVQV, EELK…SDRE, ESQSPELVQKYKKRRVVPQKPPPSPHPTEEEPEHRV, and EANKERQRQSELESNYRRVWGSPGGEDTGDLDEFDF. 2 stretches are compositionally biased toward basic and acidic residues: residues 263–281 and 294–310; these read AESKQHEEKVTEEVQDTDH and PKKEDVSPTKEDKESEF. Positions 320–332 are enriched in low complexity; that stretch reads QATGTEEAQAGEQ. Composition is skewed to basic and acidic residues over residues 370 to 379 and 395 to 412; these read EELKGAEKGK and PQREAEAKGKGGEPRGLV. A compositionally biased stretch (acidic residues) spans 413–429; sequence EEEDGDEEEEDEDEDEQ. Basic and acidic residues predominate over residues 434–449; that stretch reads EFEKELEGMLLPSDRE. Over residues 631 to 646 the composition is skewed to basic and acidic residues; that stretch reads EANKERQRQSELESNY. The span at 657–666 shows a compositional bias: acidic residues; sequence DTGDLDEFDF.

This sequence belongs to the OS-9 family. As to quaternary structure, component of the HRD1 complex, which comprises at least SYNV1/HRD1, DERL1/2, FAM8A1, HERPUD1/HERP, OS9, SEL1L and UBE2J1. FAM8A1 is stabilized by interaction with SYNV1, which prevents its proteasomal degradation. OS9 and UBE2J1 recruitment to the complex may be mediated by SEL1L. Through this complex, may interact with ERLEC1 and HSPA5. Interacts (via C-terminus) with CPNE6 (via second C2 domain); this interaction occurs in a calcium-dependent manner in vitro. Interacts with CREB3. Post-translationally, intramolecular disulfide bonds.

Its subcellular location is the endoplasmic reticulum lumen. Its function is as follows. Lectin component of the HRD1 complex, which functions in endoplasmic reticulum (ER) quality control and ER-associated degradation (ERAD). Specifically recognizes and binds improperly folded glycoproteins as well as hyperglycosylated proteins, retain them in the ER, and transfers them to the ubiquitination machinery and promote their degradation. Possible targets include TRPV4 as well as hyperglycosylated HSP90B1. In Rattus norvegicus (Rat), this protein is Protein OS-9 (Os9).